A 342-amino-acid chain; its full sequence is Immune-associated nucleotide-binding protein 9 (342 aa).

The AIG1-type G domain maps to 22–229 (NPKRTLVLVG…YSDELFHELQ (208 aa)). Residues 31 to 38 (GRTGNGKS) are G1. GTP contacts are provided by residues 31–39 (GRTGNGKSA) and Ser-52. Positions 58–62 (GVTST) are G2. Residues 80–83 (DTPG) form a G3 region. Positions 149-152 (TGGD) are G4. The G5 stretch occupies residues 188 to 190 (NNK). Asn-189 contacts GTP. Residues 276–342 (ETKLRDTAKR…QKKLGKCINL (67 aa)) are a coiled coil.

It belongs to the TRAFAC class TrmE-Era-EngA-EngB-Septin-like GTPase superfamily. AIG1/Toc34/Toc159-like paraseptin GTPase family. IAN subfamily. Mainly expressed in leaves.

The protein is Immune-associated nucleotide-binding protein 9 of Arabidopsis thaliana (Mouse-ear cress).